Here is a 1203-residue protein sequence, read N- to C-terminus: Probable phospholipid-transporting ATPase 11 (1203 aa).

The Cytoplasmic portion of the chain corresponds to 1–71; it reads MTKCRRRRLH…STKYTLASFI (71 aa). A helical transmembrane segment spans residues 72-93; that stretch reads PKSLFEQFRRVANFYFLVTGVL. Over 94-97 the chain is Extracellular; that stretch reads SLTA. A helical transmembrane segment spans residues 98 to 120; it reads LSPYSPISALLPLTFVIAASMVK. Over 121 to 303 the chain is Cytoplasmic; it reads EAIEDWGRKK…SRIERKMDKI (183 aa). A helical transmembrane segment spans residues 304-325; it reads IYLMFGVVFLMSFIGSIVFGIE. At 326 to 363 the chain is on the extracellular side; the sequence is TREDRVRNGGRTERWYLRPDNADIFFDPDRAPMAAVYH. The helical transmembrane segment at 364 to 381 threads the bilayer; sequence FFTAVMLYSYFIPISLYV. At 382 to 921 the chain is on the cytoplasmic side; it reads SIEIVKVLQS…HGHWCYSRIS (540 aa). The active-site 4-aspartylphosphate intermediate is the D429. The Mg(2+) site is built by D866 and D870. A helical transmembrane segment spans residues 922–941; sequence SMICYFFYKNITFGVTVFLY. The Extracellular portion of the chain corresponds to 942 to 955; sequence EAYTSFSAQPAYND. A helical transmembrane segment spans residues 956–975; that stretch reads WFLSLFNVFFSSLPVIALGV. Topologically, residues 976 to 1005 are cytoplasmic; the sequence is FDQDVSARYCYKFPLLYQEGVQNLLFSWKR. Residues 1006-1028 traverse the membrane as a helical segment; that stretch reads IIGWMFNGVFTALAIFFLCKESL. Topologically, residues 1029–1041 are extracellular; sequence KHQLYNPNGKTAG. A helical membrane pass occupies residues 1042–1064; the sequence is REILGGTMYTCVVWVVNLQMALA. Residues 1065-1070 lie on the Cytoplasmic side of the membrane; it reads ISYFTW. Residues 1071–1091 traverse the membrane as a helical segment; it reads LQHIVIWGSVAFWYIFLMIYG. Over 1092-1108 the chain is Extracellular; it reads AITPSFSTDAYKVFIEA. A helical membrane pass occupies residues 1109–1133; the sequence is LAPAPSYWLTTLFVMFFALIPFFVF. The Cytoplasmic segment spans residues 1134-1203; sequence KSVQMRFFPG…DQLNKNFIAF (70 aa).

The protein belongs to the cation transport ATPase (P-type) (TC 3.A.3) family. Type IV subfamily.

It is found in the membrane. The enzyme catalyses ATP + H2O + phospholipidSide 1 = ADP + phosphate + phospholipidSide 2.. Its function is as follows. Involved in transport of phospholipids. The protein is Probable phospholipid-transporting ATPase 11 of Arabidopsis thaliana (Mouse-ear cress).